Consider the following 376-residue polypeptide: Dual-specificity RNA methyltransferase RlmN (376 aa).

The Proton acceptor role is filled by glutamate 96. Residues 102–341 form the Radical SAM core domain; the sequence is DEDRATLCVS…VVVRKTRGDD (240 aa). An intrachain disulfide couples cysteine 109 to cysteine 346. [4Fe-4S] cluster contacts are provided by cysteine 116, cysteine 120, and cysteine 123. S-adenosyl-L-methionine is bound by residues 170 to 171, serine 202, 224 to 226, and asparagine 303; these read GE and SLH. Cysteine 346 functions as the S-methylcysteine intermediate in the catalytic mechanism.

The protein belongs to the radical SAM superfamily. RlmN family. Requires [4Fe-4S] cluster as cofactor.

The protein resides in the cytoplasm. It catalyses the reaction adenosine(2503) in 23S rRNA + 2 reduced [2Fe-2S]-[ferredoxin] + 2 S-adenosyl-L-methionine = 2-methyladenosine(2503) in 23S rRNA + 5'-deoxyadenosine + L-methionine + 2 oxidized [2Fe-2S]-[ferredoxin] + S-adenosyl-L-homocysteine. The catalysed reaction is adenosine(37) in tRNA + 2 reduced [2Fe-2S]-[ferredoxin] + 2 S-adenosyl-L-methionine = 2-methyladenosine(37) in tRNA + 5'-deoxyadenosine + L-methionine + 2 oxidized [2Fe-2S]-[ferredoxin] + S-adenosyl-L-homocysteine. Functionally, specifically methylates position 2 of adenine 2503 in 23S rRNA and position 2 of adenine 37 in tRNAs. m2A2503 modification seems to play a crucial role in the proofreading step occurring at the peptidyl transferase center and thus would serve to optimize ribosomal fidelity. The protein is Dual-specificity RNA methyltransferase RlmN of Pseudoalteromonas atlantica (strain T6c / ATCC BAA-1087).